The sequence spans 810 residues: Leucine--tRNA ligase (810 aa).

The 'HIGH' region motif lies at 41-52; that stretch reads PYPSGQGLHVGH. A 'KMSKS' region motif is present at residues 582-586; it reads KMSKS. Lysine 585 contacts ATP.

It belongs to the class-I aminoacyl-tRNA synthetase family.

The protein resides in the cytoplasm. The enzyme catalyses tRNA(Leu) + L-leucine + ATP = L-leucyl-tRNA(Leu) + AMP + diphosphate. The sequence is that of Leucine--tRNA ligase from Oenococcus oeni (strain ATCC BAA-331 / PSU-1).